Consider the following 371-residue polypeptide: Glycerol-3-phosphate dehydrogenase [NAD(+)] 2 (371 aa).

Residues 18–23 (GSGNWG), Phe50, and Phe106 contribute to the NAD(+) site. Residue Lys129 participates in substrate binding. An NAD(+)-binding site is contributed by Ala162. The active-site Proton acceptor is the Lys222. Positions 294 and 323 each coordinate NAD(+). 294 to 295 (RN) is a substrate binding site.

It belongs to the NAD-dependent glycerol-3-phosphate dehydrogenase family. Interacts with human CFH/complement factor H; the interaction is direct and enables the pathogen to evade the host innate immune system. Interacts with human CFHR1/complement factor H-related protein 1; the interaction is direct. Interacts with human PLG/plasminogen; the interaction is direct and provides active plasmin on the surface of fungal cells.

It localises to the secreted. Its subcellular location is the cell wall. It is found in the cytoplasm. The protein localises to the peroxisome. It carries out the reaction sn-glycerol 3-phosphate + NAD(+) = dihydroxyacetone phosphate + NADH + H(+). Functionally, may catalyze the production and accumulation of glycerol during hyperosmotic stress conditions. Glycerol acts as a osmoregulator that prevents loss of water and turgor of the cells. Mediates evasion of the host innate immune system by binding inhibitory components of the host alternative complement system, in a manner dependent on estrogen-induced inhibition of EBP1. In Candida albicans (strain SC5314 / ATCC MYA-2876) (Yeast), this protein is Glycerol-3-phosphate dehydrogenase [NAD(+)] 2.